A 6306-amino-acid chain; its full sequence is Adhesion G-protein coupled receptor V1 (6306 aa).

An N-terminal signal peptide occupies residues methionine 1 to glycine 29. Calx-beta domains are found at residues glutamate 30–threonine 117, valine 133–lysine 237, proline 262–leucine 362, lysine 388–leucine 488, proline 645–leucine 745, aspartate 763–serine 861, valine 876–leucine 979, alanine 993–leucine 1093, threonine 1108–valine 1208, alanine 1444–lysine 1544, threonine 1564–leucine 1665, threonine 1710–leucine 1809, isoleucine 1850–leucine 1952, threonine 1966–leucine 2079, glutamine 2107–methionine 2206, valine 2222–threonine 2324, threonine 2441–serine 2541, asparagine 2584–valine 2676, aspartate 2689–leucine 2789, leucine 2814–threonine 2925, threonine 2947–threonine 3048, and leucine 3063–phenylalanine 3172. Over glutamate 30–alanine 5908 the chain is Extracellular. 6 EAR repeats span residues valine 3255–glycine 3296, isoleucine 3297–serine 3345, lysine 3348–glycine 3393, serine 3395–glycine 3439, glycine 3441–methionine 3488, and serine 3492–serine 3534. Calx-beta domains follow at residues aspartate 3525–leucine 3625, serine 3639–leucine 3739, glycine 3775–threonine 3875, alanine 3899–isoleucine 4006, valine 4020–isoleucine 4123, isoleucine 4139–leucine 4239, alanine 4255–threonine 4354, arginine 4387–threonine 4489, serine 4512–leucine 4612, glutamate 4634–leucine 4734, serine 4992–threonine 5095, alanine 5288–leucine 5332, and isoleucine 5368–leucine 5468. The GAIN-B domain occupies serine 5747–serine 5903. Cystine bridges form between cysteine 5856/cysteine 5885 and cysteine 5873/cysteine 5887. Positions cysteine 5856–serine 5903 are GPS. A helical transmembrane segment spans residues phenylalanine 5909 to phenylalanine 5929. Residues cysteine 5930–lysine 5939 are Cytoplasmic-facing. A helical transmembrane segment spans residues leucine 5940–tyrosine 5960. Topologically, residues alanine 5961–tyrosine 5979 are extracellular. Residues leucine 5980–valine 6000 form a helical membrane-spanning segment. Topologically, residues methionine 6001 to tyrosine 6010 are cytoplasmic. The chain crosses the membrane as a helical span at residues leucine 6011–isoleucine 6031. Residues leucine 6032 to alanine 6059 are Extracellular-facing. The helical transmembrane segment at alanine 6060 to isoleucine 6080 threads the bilayer. The Cytoplasmic segment spans residues histidine 6081 to glutamate 6104. A helical membrane pass occupies residues isoleucine 6105 to histidine 6125. At methionine 6126–methionine 6133 the chain is on the extracellular side. A helical membrane pass occupies residues leucine 6134–isoleucine 6154. The Cytoplasmic portion of the chain corresponds to leucine 6155 to leucine 6306. A disordered region spans residues alanine 6216–serine 6248. A compositionally biased stretch (polar residues) spans serine 6217–serine 6240.

The protein belongs to the G-protein coupled receptor 2 family. Adhesion G-protein coupled receptor (ADGR) subfamily. In terms of assembly, forms a heterodimer, consisting of a large extracellular region (alpha subunit) non-covalently linked to a seven-transmembrane moiety (beta subunit). Component of USH2 complex, composed of ADGRV1, PDZD7, USH2A and WHRN. Interacts with USH2A and WHRN. Interacts (via the cytoplasmic region) with PDZD7. Interacts (via the cytoplasmic region) with MYO7A (via MyTH4-FERM domains). Post-translationally, autoproteolytically cleaved into 2 subunits, an extracellular alpha subunit and a seven-transmembrane subunit. As to expression, expressed at low levels in adult tissues.

Its subcellular location is the cell membrane. The protein localises to the cell projection. It localises to the stereocilium membrane. It is found in the photoreceptor inner segment. G-protein coupled receptor which has an essential role in the development of hearing and vision. Couples to G-alpha(i)-proteins, GNAI1/2/3, G-alpha(q)-proteins, GNAQ, as well as G-alpha(s)-proteins, GNAS, inhibiting adenylate cyclase (AC) activity and cAMP production. Required for the hair bundle ankle formation, which connects growing stereocilia in developing cochlear hair cells of the inner ear. In response to extracellular calcium, activates kinases PKA and PKC to regulate myelination by inhibiting the ubiquitination of MAG, thus enhancing the stability of this protein in myelin-forming cells of the auditory pathway. In retina photoreceptors, the USH2 complex is required for the maintenance of periciliary membrane complex that seems to play a role in regulating intracellular protein transport. Involved in the regulation of bone metabolism. Functionally, cleaved ADGRV1 beta-subunit couples with G-alpha(i)-proteins, GNAI1/2/3, and constitutively inhibits adenylate cyclase (AC) activity with a stronger effect than full ADGRV1. The protein is Adhesion G-protein coupled receptor V1 of Homo sapiens (Human).